We begin with the raw amino-acid sequence, 422 residues long: Dihydroorotase (422 aa).

Zn(2+) is bound by residues His-59 and His-61. Substrate is bound by residues 61 to 63 (HFR) and Asn-93. Asp-150, His-177, and His-230 together coordinate Zn(2+). Residue Asn-276 coordinates substrate. Asp-303 contributes to the Zn(2+) binding site. Asp-303 is a catalytic residue. His-307 contacts substrate.

The protein belongs to the metallo-dependent hydrolases superfamily. DHOase family. Class I DHOase subfamily. It depends on Zn(2+) as a cofactor.

The catalysed reaction is (S)-dihydroorotate + H2O = N-carbamoyl-L-aspartate + H(+). Its pathway is pyrimidine metabolism; UMP biosynthesis via de novo pathway; (S)-dihydroorotate from bicarbonate: step 3/3. Functionally, catalyzes the reversible cyclization of carbamoyl aspartate to dihydroorotate. The protein is Dihydroorotase of Streptococcus pyogenes serotype M3 (strain ATCC BAA-595 / MGAS315).